The primary structure comprises 356 residues: MKILAAMSGGVDSSVAAARMVDAGHEVVGVHLALSAAPGTLRTGSRGCCSKEDAADARRVADMLGIPFYVWDFADRFKEDVIDDFVEAYAEGRTPNPCVKCNEKIKFAALADRAVALGFDAVATGHYARLQDGRLRRAVDADKDQSYVLGVLTPEQLRRAMFPVGDSPKPDIRAEAEQRGLLVANKPDSHDICFIPSGDTQAFLGARIGVRRGNVVDADGSVLATHAGVHEFTIGQRKGLGLVGPAADGRPRYVTSIDAETATVRVGTVEDLEIWEFGGEPVVWTSGRVPGQPIECQVQVRAHGSVVDAIVEPGAERIHVRLRTALRGVAPGQTVVLYRPDAEGDEVLGSAVITRD.

ATP-binding positions include 6-13 (AMSGGVDS) and Leu32. Cys101 functions as the Nucleophile in the catalytic mechanism. Residues Cys101 and Cys193 are joined by a disulfide bond. Residue Gly125 coordinates ATP. Residues 143-145 (KDQ) are interaction with tRNA. Cys193 acts as the Cysteine persulfide intermediate in catalysis.

The protein belongs to the MnmA/TRMU family.

The protein resides in the cytoplasm. It catalyses the reaction S-sulfanyl-L-cysteinyl-[protein] + uridine(34) in tRNA + AH2 + ATP = 2-thiouridine(34) in tRNA + L-cysteinyl-[protein] + A + AMP + diphosphate + H(+). In terms of biological role, catalyzes the 2-thiolation of uridine at the wobble position (U34) of tRNA, leading to the formation of s(2)U34. In Mycobacteroides abscessus (strain ATCC 19977 / DSM 44196 / CCUG 20993 / CIP 104536 / JCM 13569 / NCTC 13031 / TMC 1543 / L948) (Mycobacterium abscessus), this protein is tRNA-specific 2-thiouridylase MnmA.